The following is a 957-amino-acid chain: Glycine dehydrogenase (decarboxylating) (957 aa).

Lys-708 is subject to N6-(pyridoxal phosphate)lysine.

It belongs to the GcvP family. The glycine cleavage system is composed of four proteins: P, T, L and H. Pyridoxal 5'-phosphate is required as a cofactor.

The catalysed reaction is N(6)-[(R)-lipoyl]-L-lysyl-[glycine-cleavage complex H protein] + glycine + H(+) = N(6)-[(R)-S(8)-aminomethyldihydrolipoyl]-L-lysyl-[glycine-cleavage complex H protein] + CO2. Functionally, the glycine cleavage system catalyzes the degradation of glycine. The P protein binds the alpha-amino group of glycine through its pyridoxal phosphate cofactor; CO(2) is released and the remaining methylamine moiety is then transferred to the lipoamide cofactor of the H protein. In Escherichia coli O17:K52:H18 (strain UMN026 / ExPEC), this protein is Glycine dehydrogenase (decarboxylating).